The chain runs to 198 residues: Synaptobrevin homolog YKT6 (198 aa).

Positions V8–H126 constitute a Longin domain. The v-SNARE coiled-coil homology domain occupies P138–M198. S159 bears the Phosphoserine mark. C194 carries S-palmitoyl cysteine lipidation. C195 bears the Cysteine methyl ester mark. A lipid anchor (S-farnesyl cysteine) is attached at C195. Positions A196–M198 are cleaved as a propeptide — removed in mature form.

This sequence belongs to the synaptobrevin family. As to quaternary structure, identified in 2 different SNARE complexes; the first one composed of GOSR1, GOSR2 and STX5 and the second one composed of BET1L, GOSR1 and STX5. Palmitoylated; catalyzes its own palmitoylation. Palmitoylation is required for Golgi targeting. In terms of processing, farnesylation is required for Golgi targeting.

It is found in the cytoplasm. It localises to the cytosol. The protein resides in the cytoplasmic vesicle membrane. The protein localises to the golgi apparatus membrane. Functionally, vesicular soluble NSF attachment protein receptor (v-SNARE) mediating vesicle docking and fusion to a specific acceptor cellular compartment. Functions in endoplasmic reticulum to Golgi transport; as part of a SNARE complex composed of GOSR1, GOSR2 and STX5. Functions in early/recycling endosome to TGN transport; as part of a SNARE complex composed of BET1L, GOSR1 and STX5. Has a S-palmitoyl transferase activity. This is Synaptobrevin homolog YKT6 (YKT6) from Homo sapiens (Human).